A 70-amino-acid chain; its full sequence is Small ribosomal subunit protein bS21 (70 aa).

Residues 48–61 (KLAAAVKRQSKRLR) are compositionally biased toward basic residues. Positions 48–70 (KLAAAVKRQSKRLRSQQLPPKMY) are disordered.

It belongs to the bacterial ribosomal protein bS21 family.

This chain is Small ribosomal subunit protein bS21, found in Thiobacillus denitrificans (strain ATCC 25259 / T1).